The sequence spans 146 residues: Large ribosomal subunit protein uL15 (146 aa).

The disordered stretch occupies residues 1 to 58 (MRLHELHPAPGSRPRATRVGRGIGSGLGKTSGRGHKGQKARSGGGVRRGFEGGQMPLT). The span at 21–31 (RGIGSGLGKTS) shows a compositional bias: gly residues.

The protein belongs to the universal ribosomal protein uL15 family. In terms of assembly, part of the 50S ribosomal subunit.

Functionally, binds to the 23S rRNA. The protein is Large ribosomal subunit protein uL15 of Moorella thermoacetica (strain ATCC 39073 / JCM 9320).